Here is a 436-residue protein sequence, read N- to C-terminus: uncharacterized protein (436 aa).

This is an uncharacterized protein from Arabidopsis thaliana (Mouse-ear cress).